Reading from the N-terminus, the 360-residue chain is uncharacterized protein (360 aa).

Helical transmembrane passes span 26-48 (SVCY…SGAT), 58-80 (LHPL…ASVL), 89-111 (VMGL…NIAH), 126-148 (LSTG…SILA), 169-191 (RLAY…PTAL), 195-214 (IPSV…YALL), and 227-249 (CALC…SHMV).

The protein localises to the cell membrane. This is an uncharacterized protein from Treponema pallidum (strain Nichols).